The chain runs to 427 residues: Peptidase B (427 aa).

Residues Lys-195 and Asp-200 each coordinate Mn(2+). Lys-207 is an active-site residue. Asp-218, Asp-277, and Glu-279 together coordinate Mn(2+). Arg-281 is an active-site residue.

The protein belongs to the peptidase M17 family. Homohexamer. Requires Mn(2+) as cofactor.

It localises to the cytoplasm. It catalyses the reaction Release of an N-terminal amino acid, Xaa, from a peptide or arylamide. Xaa is preferably Glu or Asp but may be other amino acids, including Leu, Met, His, Cys and Gln.. In terms of biological role, probably plays an important role in intracellular peptide degradation. The chain is Peptidase B from Shigella flexneri serotype 5b (strain 8401).